Consider the following 1123-residue polypeptide: Adenylyl cyclase X E (1123 aa).

Topologically, residues 1 to 47 (MPRSLGNCQLNYSKERMWEPGYLKAKCAELRLESEFRLYRIRLWKSY) are cytoplasmic. Residues 48-68 (LLTFFMLHIFVTSVHCALLLA) traverse the membrane as a helical segment. Over 69-73 (TIERR) the chain is Extracellular. The chain crosses the membrane as a helical span at residues 74–94 (SIIYFDVALSIGCALVLILVL). Residues 95–106 (SVNFCDEFIAKH) are Cytoplasmic-facing. The helical transmembrane segment at 107–127 (TWYMYASSIFASLTLVFADLT) threads the bilayer. The Extracellular segment spans residues 128–137 (ESIYHTYAHS). Residues 138–158 (WILGTFYDTYIIYMIYMFLPI) traverse the membrane as a helical segment. Over 159–163 (HFISG) the chain is Cytoplasmic. Residues 164-184 (AVLLALLVSGLYILYFVIFIA) traverse the membrane as a helical segment. Residues 185–196 (QGFAQFASALFS) lie on the Extracellular side of the membrane. Residues 197-217 (VGGMSVDIVHYLCLNLVGIFY) form a helical membrane-spanning segment. The Cytoplasmic segment spans residues 218-581 (RVMNDTVVRS…YLKQTDYMYK (364 aa)). ATP is bound by residues 346 to 348 (LGD) and arginine 392. Aspartate 348 is a Mg(2+) binding site. A helical transmembrane segment spans residues 582–602 (YSIILSASVGCSLVYIELMDT). Topologically, residues 603 to 608 (QMICSS) are extracellular. A helical transmembrane segment spans residues 609 to 629 (CFVLPASVATIQCILALIAWY). Over 630 to 667 (KKYCWTRYGRNNVPHHYNGFSCFIFRIHDKILNSLPIR) the chain is Cytoplasmic. A helical membrane pass occupies residues 668 to 688 (ICIYLFLMISSFFVMCLIVMS). The Extracellular portion of the chain corresponds to 689–719 (CQREEFEMAYIEERLFHYEQEAHICFHPWVT). The chain crosses the membrane as a helical span at residues 720 to 740 (TNMLSLMICLTFTFAHIPIMV). Residues 741–743 (KTA) lie on the Cytoplasmic side of the membrane. A helical transmembrane segment spans residues 744-764 (VAILETLAYLLLIFFQFDFVF). The Extracellular portion of the chain corresponds to 765-772 (HHSVTTNP). A helical membrane pass occupies residues 773–793 (YFKSEYAHALLICITFLIMFV). The Cytoplasmic portion of the chain corresponds to 794-1123 (KERQIEFTNK…STSRHTLQSL (330 aa)). ATP contacts are provided by residues lysine 903, 1014–1016 (DIW), 1021–1025 (NMASR), and lysine 1061.

This sequence belongs to the adenylyl cyclase class-4/guanylyl cyclase family. Expressed in labella.

The protein localises to the membrane. It catalyses the reaction ATP = 3',5'-cyclic AMP + diphosphate. Functionally, catalyzes the formation of the signaling molecule cAMP in response to G-protein signaling. The polypeptide is Adenylyl cyclase X E (Drosophila melanogaster (Fruit fly)).